We begin with the raw amino-acid sequence, 179 residues long: Hypoxanthine-guanine phosphoribosyltransferase (179 aa).

Diphosphate is bound by residues Lys-42 and Gly-43. Residues Glu-98 and Asp-99 each contribute to the Mg(2+) site. Glu-102 acts as the Proton acceptor in catalysis. GMP-binding positions include Lys-130, 151–152, and Asp-158; that span reads FV. Arg-164 contributes to the diphosphate binding site.

This sequence belongs to the purine/pyrimidine phosphoribosyltransferase family. Mg(2+) is required as a cofactor.

The protein resides in the cytoplasm. It catalyses the reaction IMP + diphosphate = hypoxanthine + 5-phospho-alpha-D-ribose 1-diphosphate. It carries out the reaction GMP + diphosphate = guanine + 5-phospho-alpha-D-ribose 1-diphosphate. The protein operates within purine metabolism; IMP biosynthesis via salvage pathway; IMP from hypoxanthine: step 1/1. It functions in the pathway purine metabolism; GMP biosynthesis via salvage pathway; GMP from guanine: step 1/1. Functionally, purine salvage pathway enzyme that catalyzes the transfer of the ribosyl-5-phosphate group from 5-phospho-alpha-D-ribose 1-diphosphate (PRPP) to the N9 position of the 6-oxopurines hypoxanthine and guanine to form the corresponding ribonucleotides IMP (inosine 5'-monophosphate) and GMP (guanosine 5'-monophosphate), with the release of PPi. The protein is Hypoxanthine-guanine phosphoribosyltransferase (hpt) of Staphylococcus epidermidis (strain ATCC 35984 / DSM 28319 / BCRC 17069 / CCUG 31568 / BM 3577 / RP62A).